The primary structure comprises 434 residues: ATP-dependent protease ATPase subunit HslU (434 aa).

ATP is bound by residues Val-18, 60–65 (GVGKTE), Asp-247, Glu-312, and Arg-384.

The protein belongs to the ClpX chaperone family. HslU subfamily. In terms of assembly, a double ring-shaped homohexamer of HslV is capped on each side by a ring-shaped HslU homohexamer. The assembly of the HslU/HslV complex is dependent on binding of ATP.

It localises to the cytoplasm. ATPase subunit of a proteasome-like degradation complex; this subunit has chaperone activity. The binding of ATP and its subsequent hydrolysis by HslU are essential for unfolding of protein substrates subsequently hydrolyzed by HslV. HslU recognizes the N-terminal part of its protein substrates and unfolds these before they are guided to HslV for hydrolysis. The sequence is that of ATP-dependent protease ATPase subunit HslU from Bradyrhizobium sp. (strain ORS 278).